Here is a 166-residue protein sequence, read N- to C-terminus: Monothiol glutaredoxin-3 (166 aa).

The region spanning 56–159 is the Glutaredoxin domain; it reads DSTDFEVFLE…STLDEWTHNK (104 aa). C76 is a [2Fe-2S] cluster binding site.

This sequence belongs to the glutaredoxin family. Monothiol subfamily. Homodimer.

It localises to the nucleus. Monothiol glutaredoxin involved in the biogenesis of iron-sulfur clusters. Binds one iron-sulfur cluster per dimer. The iron-sulfur cluster is bound between subunits, and is complexed by a bound glutathione and a cysteine residue from each subunit. The sequence is that of Monothiol glutaredoxin-3 (grx3) from Schizosaccharomyces pombe (strain 972 / ATCC 24843) (Fission yeast).